A 350-amino-acid chain; its full sequence is Hydroxymethylglutaryl-CoA synthase (350 aa).

Glu83 functions as the Proton donor/acceptor in the catalytic mechanism. Cys115 functions as the Acyl-thioester intermediate in the catalytic mechanism. (3S)-3-hydroxy-3-methylglutaryl-CoA is bound by residues Cys115 and Thr156. A CoA-binding site is contributed by Arg204. (3S)-3-hydroxy-3-methylglutaryl-CoA is bound by residues Thr206 and His239. His239 functions as the Proton donor/acceptor in the catalytic mechanism. Lys244 is a CoA binding site. 2 residues coordinate (3S)-3-hydroxy-3-methylglutaryl-CoA: Asn271 and Ser301.

The protein belongs to the thiolase-like superfamily. Archaeal HMG-CoA synthase family. Interacts with acetoacetyl-CoA thiolase that catalyzes the precedent step in the pathway and with a DUF35 protein. The acetoacetyl-CoA thiolase/HMG-CoA synthase complex channels the intermediate via a fused CoA-binding site, which allows for efficient coupling of the endergonic thiolase reaction with the exergonic HMGCS reaction.

The enzyme catalyses acetoacetyl-CoA + acetyl-CoA + H2O = (3S)-3-hydroxy-3-methylglutaryl-CoA + CoA + H(+). It functions in the pathway metabolic intermediate biosynthesis; (R)-mevalonate biosynthesis; (R)-mevalonate from acetyl-CoA: step 2/3. In terms of biological role, catalyzes the condensation of acetyl-CoA with acetoacetyl-CoA to form 3-hydroxy-3-methylglutaryl-CoA (HMG-CoA). Functions in the mevalonate (MVA) pathway leading to isopentenyl diphosphate (IPP), a key precursor for the biosynthesis of isoprenoid compounds that are building blocks of archaeal membrane lipids. This is Hydroxymethylglutaryl-CoA synthase from Thermococcus onnurineus (strain NA1).